Reading from the N-terminus, the 339-residue chain is DNA-directed RNA polymerase subunit alpha (339 aa).

The segment at 1-233 (MVREEVAGST…DLFLPFLHAE (233 aa)) is alpha N-terminal domain (alpha-NTD). The interval 264 to 339 (KKGIPLNCIF…IDLLKNKLSF (76 aa)) is alpha C-terminal domain (alpha-CTD).

This sequence belongs to the RNA polymerase alpha chain family. In terms of assembly, in plastids the minimal PEP RNA polymerase catalytic core is composed of four subunits: alpha, beta, beta', and beta''. When a (nuclear-encoded) sigma factor is associated with the core the holoenzyme is formed, which can initiate transcription.

The protein localises to the plastid. Its subcellular location is the chloroplast. It catalyses the reaction RNA(n) + a ribonucleoside 5'-triphosphate = RNA(n+1) + diphosphate. DNA-dependent RNA polymerase catalyzes the transcription of DNA into RNA using the four ribonucleoside triphosphates as substrates. This chain is DNA-directed RNA polymerase subunit alpha, found in Australopyrum velutinum (Mountain wheat-grass).